The primary structure comprises 637 residues: Transcription factor GLABRA 3 (637 aa).

In terms of domain architecture, bHLH spans 437–486; it reads DETGNHAVLEKKRREKLNERFMTLRKIIPSINKIDKVSILDDTIEYLQEL. The disordered stretch occupies residues 497–521; it reads RESTDTETRGTMTMKRKKPCDAGER. The interval 541-637 is binding with MYB0/GL1 and MYB23; sequence NVGEAEPADT…EALQRVAWIC (97 aa).

As to quaternary structure, efficient DNA binding requires dimerization with another bHLH protein. Homodimer and heterodimer with BHLH2. Interacts directly with TTG1 and MYB0/GL1 to form a complex. Its interaction with TRY prevents MYB0/GL1 binding. Interacts with MYB75/PAP1, MYB90/PAP2, TT2, CPC, MYB23 and MYB66/WER. Interacts with MYB82. As to expression, mostly expressed in roots and flowers. Also present in stems and leaves, and, to a lower extent, in hypocotyls. Expressed in epidermal root hair cells (trichoblasts) and moves to root hairless cells (atrichoblasts) by a cell-to-cell movement through plasmodesmata (at protein level).

It is found in the nucleus. Functionally, transcription activator, when associated with MYB75/PAP1, MYB90/PAP2 or TT2. Involved in epidermal cell fate specification. Negatively regulates stomata formation, but, in association with TTG1 and MYB0/GL1, promotes trichome formation, branching and endoreplication. Also regulates trichome cell wall maturation. Together with MYB66/WER, promotes the formation of non-hair cells in root epidermis cells in the N position. Whereas together with CPC, promotes the formation of hair cells in root epidermis cells in the H position by inhibiting non-hair cell formation. Also seems to play a role in the activation of anthocyanin biosynthesis, probably together with MYB75/PAP1. Activates the transcription of GL2. The polypeptide is Transcription factor GLABRA 3 (GL3) (Arabidopsis thaliana (Mouse-ear cress)).